Consider the following 174-residue polypeptide: Ribosome maturation factor RimM (174 aa).

A PRC barrel domain is found at 96 to 169; that stretch reads EPDTYYDHQL…ILEIDPPDGL (74 aa).

The protein belongs to the RimM family. Binds ribosomal protein uS19.

It localises to the cytoplasm. Its function is as follows. An accessory protein needed during the final step in the assembly of 30S ribosomal subunit, possibly for assembly of the head region. Essential for efficient processing of 16S rRNA. May be needed both before and after RbfA during the maturation of 16S rRNA. It has affinity for free ribosomal 30S subunits but not for 70S ribosomes. This Mycobacterium marinum (strain ATCC BAA-535 / M) protein is Ribosome maturation factor RimM.